The sequence spans 400 residues: Canavanine gamma-lyase (400 aa).

Position 213 is an N6-(pyridoxal phosphate)lysine (lysine 213).

Belongs to the trans-sulfuration enzymes family. The cofactor is pyridoxal 5'-phosphate.

The enzyme catalyses L-canavanine + H2O = N-hydroxyguanidine + L-homoserine. Functionally, lyase involved in the degradation of canavanine, the delta-oxa-analog of arginine, allowing growth on canavanine as sole nitrogen and carbon source. Catalyzes the elimination of hydroxyguanidine from canavanine with a subsequent water addition to yield homoserine. Is highly specific for canavanine and cannot use methionine, cystathionine or arginine. The chain is Canavanine gamma-lyase from Pseudomonas canavaninivorans.